Consider the following 559-residue polypeptide: Urocanate hydratase (559 aa).

Residues 53–54 (GG), Q131, 177–179 (GMG), E197, R202, 243–244 (NA), 264–268 (QTSAH), 274–275 (YL), and Y323 each bind NAD(+). The active site involves C411. G493 is an NAD(+) binding site.

Belongs to the urocanase family. NAD(+) serves as cofactor.

It localises to the cytoplasm. The enzyme catalyses 4-imidazolone-5-propanoate = trans-urocanate + H2O. Its pathway is amino-acid degradation; L-histidine degradation into L-glutamate; N-formimidoyl-L-glutamate from L-histidine: step 2/3. In terms of biological role, catalyzes the conversion of urocanate to 4-imidazolone-5-propionate. The chain is Urocanate hydratase from Pseudomonas aeruginosa (strain ATCC 15692 / DSM 22644 / CIP 104116 / JCM 14847 / LMG 12228 / 1C / PRS 101 / PAO1).